A 513-amino-acid polypeptide reads, in one-letter code: Maturase K (513 aa).

Belongs to the intron maturase 2 family. MatK subfamily.

Its subcellular location is the plastid. It localises to the chloroplast. Usually encoded in the trnK tRNA gene intron. Probably assists in splicing its own and other chloroplast group II introns. The polypeptide is Maturase K (Astrebla lappacea (Curly Mitchell grass)).